The chain runs to 202 residues: Tetranectin (202 aa).

Positions 1–21 (MELWGAYLLLCLFSLLTQVTT) are cleaved as a signal peptide. Threonine 25 is a glycosylation site (O-linked (GalNAc...) threonine). Disulfide bonds link cysteine 71–cysteine 81, cysteine 98–cysteine 197, and cysteine 173–cysteine 189. Residues 77-198 (VHMKCFLAFT…CRDQLPYICQ (122 aa)) enclose the C-type lectin domain.

As to quaternary structure, homotrimer. As to expression, found in plasma.

It is found in the secreted. Functionally, tetranectin binds to plasminogen and to isolated kringle 4. May be involved in the packaging of molecules destined for exocytosis. Plays a role in retinal function. This is Tetranectin (CLEC3B) from Homo sapiens (Human).